Consider the following 312-residue polypeptide: Plasminogen activator (312 aa).

A signal peptide spans 1–20 (MKKSSIVATIITILSGSANA). The Periplasmic segment spans residues 21–31 (ASSQLIPNISP). Residues 32–40 (DSFTVAAST) form a beta stranded membrane-spanning segment. Over 41–70 (GMLSGKSHEMLYDAETGRKISQLDWKIKNV) the chain is Extracellular. A beta stranded membrane pass occupies residues 71-80 (AILKGDISWD). The Periplasmic segment spans residues 81 to 84 (PYSF). Residues 85–94 (LTLNARGWTS) traverse the membrane as a beta stranded segment. The Extracellular portion of the chain corresponds to 95–131 (LASGSGNMDDYDWMNENQSEWTDHSSHPATNVNHANE). Residues D104 and D106 contribute to the active site. A beta stranded transmembrane segment spans residues 132–140 (YDLNVKGWL). At 141-145 (LQDEN) the chain is on the periplasmic side. Residues 146-154 (YKAGITAGY) form a beta stranded membrane-spanning segment. Topologically, residues 155 to 194 (QETRFSWTATGGSYSYNNGAYTGNFPKGVRVIGYNQRFSM) are extracellular. A beta stranded membrane pass occupies residues 195–204 (PYIGLAGQYR). Residues 205–207 (IND) lie on the Periplasmic side of the membrane. The chain crosses the membrane as a beta stranded span at residues 208 to 216 (FELNALFKF). Residues 217-244 (SDWVRAHDNDEHYMRDLTFREKTSGSRY) lie on the Extracellular side of the membrane. Catalysis depends on residues D226 and H228. A beta stranded transmembrane segment spans residues 245–255 (YGTVINAGYYV). At 256–258 (TPN) the chain is on the periplasmic side. The chain crosses the membrane as a beta stranded span at residues 259 to 267 (AKVFAEFTY). At 268 to 301 (SKYDEGKGGTQTIDKNSGDSVSIGGDAAGISNKN) the chain is on the extracellular side. Residues 302–312 (YTVTAGLQYRF) form a beta stranded membrane-spanning segment.

The protein belongs to the peptidase A26 family.

The protein localises to the cell outer membrane. The enzyme catalyses Converts human Glu-plasminogen to plasmin by cleaving the 560-Arg-|-Val-561 peptide bond that is also hydrolyzed by the mammalian u-plasminogen activator and t-plasminogen activator. Also cleaves arginyl bonds in other proteins.. Requires bacterial lipopolysaccharide (LPS) for activation; addition of LPS to inactive protein reactivates it. In the absence of LPS the active site groove is slightly narrower, and peptide substrate binds deep within the active site groove, displacing the nucleophilic water molecule. In the mammalian host activates (cleaves) plasminogen to generate the serine protease plasmin. Plasmin degrades fibrin clots (fibrinolysis) and facilitates bacterial cell migration, enabling rapid dissemination of bacteria from the initial site of infection. Cleaves host plasminogen to generate plasmin and probably also has autocatalytic activity. Fibrinolytic activity prevails at 37 degrees Celsius whereas coagulase expression predominates at lower temperatures (28 degrees Celsius). Cleaves plasminogen; plasminogen cleavage is much higher than coagulase activity. The chain is Plasminogen activator from Yersinia pestis.